The following is a 451-amino-acid chain: NADP-specific glutamate dehydrogenase (451 aa).

Residue Lys113 is part of the active site. The residue at position 252 (Ser252) is a Phosphoserine.

Belongs to the Glu/Leu/Phe/Val dehydrogenases family. In terms of assembly, homohexamer.

The enzyme catalyses L-glutamate + NADP(+) + H2O = 2-oxoglutarate + NH4(+) + NADPH + H(+). The chain is NADP-specific glutamate dehydrogenase (gdh1) from Schizosaccharomyces pombe (strain 972 / ATCC 24843) (Fission yeast).